Reading from the N-terminus, the 108-residue chain is Phosphoribosyl-ATP pyrophosphatase (108 aa).

This sequence belongs to the PRA-PH family.

Its subcellular location is the cytoplasm. The enzyme catalyses 1-(5-phospho-beta-D-ribosyl)-ATP + H2O = 1-(5-phospho-beta-D-ribosyl)-5'-AMP + diphosphate + H(+). It participates in amino-acid biosynthesis; L-histidine biosynthesis; L-histidine from 5-phospho-alpha-D-ribose 1-diphosphate: step 2/9. This Chromobacterium violaceum (strain ATCC 12472 / DSM 30191 / JCM 1249 / CCUG 213 / NBRC 12614 / NCIMB 9131 / NCTC 9757 / MK) protein is Phosphoribosyl-ATP pyrophosphatase.